Consider the following 490-residue polypeptide: Betaine aldehyde dehydrogenase (490 aa).

K(+)-binding residues include threonine 26 and aspartate 93. 150-152 (GAW) contacts NAD(+). Lysine 162 (charge relay system) is an active-site residue. An NAD(+)-binding site is contributed by 176 to 179 (KPSE). Valine 180 provides a ligand contact to K(+). 230 to 233 (GVAT) contributes to the NAD(+) binding site. Leucine 246 serves as a coordination point for K(+). Glutamate 252 acts as the Proton acceptor in catalysis. Glycine 254, cysteine 286, and glutamate 387 together coordinate NAD(+). The Nucleophile role is filled by cysteine 286. Residue cysteine 286 is modified to Cysteine sulfenic acid (-SOH). K(+) contacts are provided by lysine 457 and glycine 460. Glutamate 464 acts as the Charge relay system in catalysis.

This sequence belongs to the aldehyde dehydrogenase family. Dimer of dimers. It depends on K(+) as a cofactor.

It catalyses the reaction betaine aldehyde + NAD(+) + H2O = glycine betaine + NADH + 2 H(+). The protein operates within amine and polyamine biosynthesis; betaine biosynthesis via choline pathway; betaine from betaine aldehyde: step 1/1. Involved in the biosynthesis of the osmoprotectant glycine betaine. Catalyzes the irreversible oxidation of betaine aldehyde to the corresponding acid. The protein is Betaine aldehyde dehydrogenase of Stenotrophomonas maltophilia (strain K279a).